We begin with the raw amino-acid sequence, 636 residues long: DNA mismatch repair protein MutL (636 aa).

Positions 332–344 are enriched in basic and acidic residues; that stretch reads HAGEQGDSLRTDI. Disordered stretches follow at residues 332-360 and 417-443; these read HAGE…PADN and ASAP…SDDA. Over residues 417 to 437 the composition is skewed to low complexity; the sequence is ASAPADAAPAQASEPAAAPQA.

Belongs to the DNA mismatch repair MutL/HexB family.

In terms of biological role, this protein is involved in the repair of mismatches in DNA. It is required for dam-dependent methyl-directed DNA mismatch repair. May act as a 'molecular matchmaker', a protein that promotes the formation of a stable complex between two or more DNA-binding proteins in an ATP-dependent manner without itself being part of a final effector complex. This is DNA mismatch repair protein MutL from Ralstonia nicotianae (strain ATCC BAA-1114 / GMI1000) (Ralstonia solanacearum).